Reading from the N-terminus, the 94-residue chain is Small ubiquitin-related modifier 3 (94 aa).

Lysine 11 participates in a covalent cross-link: Glycyl lysine isopeptide (Lys-Gly) (interchain with G-Cter in SUMO). Residues 15–92 form the Ubiquitin-like domain; it reads DHINLKVAGQ…IDVFQQQTGG (78 aa). A Glycyl lysine isopeptide (Gly-Lys) (interchain with K-? in acceptor proteins) cross-link involves residue glycine 92. Positions 93-94 are excised as a propeptide; sequence VC.

The protein belongs to the ubiquitin family. SUMO subfamily. Interacts with sae2 and ube2i. Covalently attached to a number of proteins. Polymeric chains can be formed through Lys-11 cross-linking. In terms of processing, cleavage of precursor form by a sentrin-specific protease is necessary for function.

It localises to the cytoplasm. It is found in the nucleus. The protein resides in the PML body. In terms of biological role, ubiquitin-like protein which can be covalently attached to target lysines either as a monomer or as a lysine-linked polymer. Does not seem to be involved in protein degradation and may function as an antagonist of ubiquitin in the degradation process. Plays a role in a number of cellular processes such as nuclear transport, DNA replication and repair, mitosis and signal transduction. Covalent attachment to its substrates requires prior activation by the E1 complex sae1-sae2 and linkage to the E2 enzyme ube2i. This chain is Small ubiquitin-related modifier 3 (sumo3), found in Xenopus laevis (African clawed frog).